Here is a 564-residue protein sequence, read N- to C-terminus: Ribulokinase (564 aa).

Belongs to the ribulokinase family.

It carries out the reaction D-ribulose + ATP = D-ribulose 5-phosphate + ADP + H(+). The catalysed reaction is L-ribulose + ATP = L-ribulose 5-phosphate + ADP + H(+). It functions in the pathway carbohydrate degradation; L-arabinose degradation via L-ribulose; D-xylulose 5-phosphate from L-arabinose (bacterial route): step 2/3. This is Ribulokinase from Geobacillus thermodenitrificans (strain NG80-2).